We begin with the raw amino-acid sequence, 233 residues long: Protein lin-7 homolog A (233 aa).

The Kinase interacting site signature appears at 14–28 (MATLTVVQPLTLDRD). The region spanning 25-80 (LDRDVARAIELLEKLQESGEVPVHKLQSLKKVLQSEFCTAIREVYQYMHETITVNG) is the L27 domain. The region spanning 108-190 (VVELPKTDEG…SVKLVVRYTP (83 aa)) is the PDZ domain. The segment at 214–233 (LLIQQQQQQQQQQPQQNHMS) is disordered.

It belongs to the lin-7 family. In terms of assembly, forms a complex with CASK and CASKIN1. Component of the brain-specific heterotrimeric complex (LIN-10-LIN-2-LIN-7 complex) composed of at least APBA1, CASK, and LIN7, which associates with the motor protein KIF17 to transport vesicles along microtubules. Can also interact with other modular proteins containing protein-protein interaction domains like PALS1, PALS2, MPP7, DLG1, DLG2 and DLG3 through its L27 domain. Interacts with DLG4, GRIN2B and MARCHF11 as well as CDH1 and CTNNB1, the channels KCNJ12/Kir2.2, KCNJ4/Kir2.3 and probably KCNJ2/Kir2.1 and SLC6A12/BGT-1 via its PDZ domain. The association of LIN7A with cadherin and beta-catenin is calcium-dependent, occurs at synaptic junctions and requires the actin cytoskeleton. Interacts with EGFR, ERBB2, ERBB3 and ERBB4 with both PDZ and KID domains. Associates with KIF17 via APBA1. Interacts with HTR4. Forms a tripartite complex composed of DLG1, MPP7 and LIN7 (LIN7A or LIN7C). As to expression, expressed in the kidney, along the length of the nephron.

Its subcellular location is the cell membrane. The protein localises to the basolateral cell membrane. It is found in the cell junction. The protein resides in the postsynaptic density membrane. It localises to the tight junction. Plays a role in establishing and maintaining the asymmetric distribution of channels and receptors at the plasma membrane of polarized cells. Forms membrane-associated multiprotein complexes that may regulate delivery and recycling of proteins to the correct membrane domains. The tripartite complex composed of LIN7 (LIN7A, LIN7B or LIN7C), CASK and APBA1 associates with the motor protein KIF17 to transport vesicles containing N-methyl-D-aspartate (NMDA) receptor subunit NR2B along microtubules. This complex may have the potential to couple synaptic vesicle exocytosis to cell adhesion in brain. Ensures the proper localization of GRIN2B (subunit 2B of the NMDA receptor) to neuronal postsynaptic density and may function in localizing synaptic vesicles at synapses where it is recruited by beta-catenin and cadherin. Required to localize Kir2 channels, GABA transporter (SLC6A12) and EGFR/ERBB1, ERBB2, ERBB3 and ERBB4 to the basolateral membrane of epithelial cells. The sequence is that of Protein lin-7 homolog A (Lin7a) from Mus musculus (Mouse).